The sequence spans 238 residues: MTHVEVVATIAPQLSIEETLIQKINHRIDAIDVLELRIDQIENVTVDQVAEMITKLKVMQDSFKLLVTYRTKLQGGYGQFINDLYLNLISDLANINGIDMIDIEWQADIDIEKHQRIIKHLQQYNKEVVISHHNFESTPPLDELQFIFFKMQKFNPEYVKLAVMPHNKNDVLNLLQAMSTFSDTMDCKVVGISMSKLGLISRTAQGVFGGALTYGCIGEPQAPGQIDVTDLKAQVTLY.

3-dehydroquinate is bound by residues 35-37 and R70; that span reads ELR. Catalysis depends on H133, which acts as the Proton donor/acceptor. Residue K160 is the Schiff-base intermediate with substrate of the active site. R202 and Q225 together coordinate 3-dehydroquinate.

The protein belongs to the type-I 3-dehydroquinase family. In terms of assembly, homodimer.

It catalyses the reaction 3-dehydroquinate = 3-dehydroshikimate + H2O. Its pathway is metabolic intermediate biosynthesis; chorismate biosynthesis; chorismate from D-erythrose 4-phosphate and phosphoenolpyruvate: step 3/7. Its function is as follows. Involved in the third step of the chorismate pathway, which leads to the biosynthesis of aromatic amino acids. Catalyzes the cis-dehydration of 3-dehydroquinate (DHQ) and introduces the first double bond of the aromatic ring to yield 3-dehydroshikimate. The chain is 3-dehydroquinate dehydratase from Staphylococcus aureus (strain Mu3 / ATCC 700698).